The following is a 292-amino-acid chain: MNKKFACIGIVGHPRHPSALATHEMLFHWLVARGYSVMVERQIAQDLGLKDAVTGSLAEIGQKADLAVVVGGDGNMLGAARVLARYDIKVIGVNRGNLGFLTDLDPDNALQQLADVLEGEYIDEQRFLLETIVHKENQQCRISTAINEVVLHPGKVAHMIEFEVYIDDRFAFSQRSDGLIIATPTGSTAYSLSAGGPILTPSLEAIALVPMFPHTLSARPLVINGNSTIRLKFSQIGSDLEISCDSQIALPIQEGEEVLIRRSDFHLNLIHPKDYSYFNTLSTKLGWSKKLF.

The active-site Proton acceptor is D73. Residues 73–74, 147–148, H158, R175, D177, 188–193, and Q247 each bind NAD(+); these read DG, NE, and TAYSLS.

It belongs to the NAD kinase family. It depends on a divalent metal cation as a cofactor.

The protein resides in the cytoplasm. It carries out the reaction NAD(+) + ATP = ADP + NADP(+) + H(+). Involved in the regulation of the intracellular balance of NAD and NADP, and is a key enzyme in the biosynthesis of NADP. Catalyzes specifically the phosphorylation on 2'-hydroxyl of the adenosine moiety of NAD to yield NADP. This chain is NAD kinase, found in Serratia proteamaculans (strain 568).